Reading from the N-terminus, the 501-residue chain is Glycerol kinase (501 aa).

An ADP-binding site is contributed by Thr17. Positions 17, 18, and 19 each coordinate ATP. Thr17 contacts sn-glycerol 3-phosphate. Arg21 is a binding site for ADP. The sn-glycerol 3-phosphate site is built by Arg87, Glu88, Tyr139, and Asp243. Residues Arg87, Glu88, Tyr139, Asp243, and Gln244 each contribute to the glycerol site. Residues Thr265 and Gly308 each contribute to the ADP site. The ATP site is built by Thr265, Gly308, Gln312, and Gly409. ADP contacts are provided by Gly409 and Asn413.

This sequence belongs to the FGGY kinase family.

It catalyses the reaction glycerol + ATP = sn-glycerol 3-phosphate + ADP + H(+). The protein operates within polyol metabolism; glycerol degradation via glycerol kinase pathway; sn-glycerol 3-phosphate from glycerol: step 1/1. Inhibited by fructose 1,6-bisphosphate (FBP). Key enzyme in the regulation of glycerol uptake and metabolism. Catalyzes the phosphorylation of glycerol to yield sn-glycerol 3-phosphate. The sequence is that of Glycerol kinase from Pseudomonas syringae pv. tomato (strain ATCC BAA-871 / DC3000).